A 181-amino-acid polypeptide reads, in one-letter code: ATP-dependent protease subunit HslV (181 aa).

The active site involves Thr7. Gly166, Cys169, and Thr172 together coordinate Na(+).

This sequence belongs to the peptidase T1B family. HslV subfamily. As to quaternary structure, a double ring-shaped homohexamer of HslV is capped on each side by a ring-shaped HslU homohexamer. The assembly of the HslU/HslV complex is dependent on binding of ATP.

It is found in the cytoplasm. The catalysed reaction is ATP-dependent cleavage of peptide bonds with broad specificity.. With respect to regulation, allosterically activated by HslU binding. Functionally, protease subunit of a proteasome-like degradation complex believed to be a general protein degrading machinery. This Variovorax paradoxus (strain S110) protein is ATP-dependent protease subunit HslV.